Consider the following 202-residue polypeptide: Thymidylate kinase (202 aa).

7–14 (GTEGVGKT) is a binding site for ATP.

The protein belongs to the thymidylate kinase family.

The catalysed reaction is dTMP + ATP = dTDP + ADP. Its function is as follows. Phosphorylation of dTMP to form dTDP in both de novo and salvage pathways of dTTP synthesis. This chain is Thymidylate kinase, found in Acinetobacter baylyi (strain ATCC 33305 / BD413 / ADP1).